A 433-amino-acid polypeptide reads, in one-letter code: Legumain (433 aa).

Positions 1-17 (MVWKVAVFLSAALVIGA) are cleaved as a signal peptide. Asn91 is a glycosylation site (N-linked (GlcNAc...) asparagine). Residue His148 is part of the active site. Asn167 carries N-linked (GlcNAc...) asparagine glycosylation. Residue Cys189 is the Nucleophile of the active site. N-linked (GlcNAc...) asparagine glycans are attached at residues Asn263 and Asn272. Positions 324-433 (DLEESRQLTE…SMDHVCLGHY (110 aa)) are excised as a propeptide. Disulfide bonds link Cys378/Cys412 and Cys390/Cys429.

It belongs to the peptidase C13 family. As to quaternary structure, homodimer before autocatalytic removal of the propeptide. Monomer after autocatalytic processing. May interact with integrins. Activated by autocatalytic processing at pH 4.

It is found in the lysosome. The catalysed reaction is Hydrolysis of proteins and small molecule substrates at -Asn-|-Xaa- bonds.. Has a strict specificity for hydrolysis of asparaginyl bonds. Can also cleave aspartyl bonds slowly, especially under acidic conditions. Involved in the processing of proteins for MHC class II antigen presentation in the lysosomal/endosomal system. Also involved in MHC class I antigen presentation in cross-presenting dendritic cells by mediating cleavage and maturation of Perforin-2 (MPEG1), thereby promoting antigen translocation in the cytosol. Required for normal lysosomal protein degradation in renal proximal tubules. Required for normal degradation of internalized EGFR. Plays a role in the regulation of cell proliferation via its role in EGFR degradation. The polypeptide is Legumain (LGMN) (Pongo abelii (Sumatran orangutan)).